The primary structure comprises 213 residues: Kynurenine formamidase (213 aa).

Trp18 contributes to the substrate binding site. The Zn(2+) site is built by His48, His52, and Asp54. The active-site Proton donor/acceptor is the His58. Positions 160 and 172 each coordinate Zn(2+).

The protein belongs to the Cyclase 1 superfamily. KynB family. As to quaternary structure, homodimer. Zn(2+) serves as cofactor.

The catalysed reaction is N-formyl-L-kynurenine + H2O = L-kynurenine + formate + H(+). It functions in the pathway amino-acid degradation; L-tryptophan degradation via kynurenine pathway; L-kynurenine from L-tryptophan: step 2/2. In terms of biological role, catalyzes the hydrolysis of N-formyl-L-kynurenine to L-kynurenine, the second step in the kynurenine pathway of tryptophan degradation. The sequence is that of Kynurenine formamidase from Burkholderia pseudomallei (strain 668).